Here is a 230-residue protein sequence, read N- to C-terminus: Ion-translocating oxidoreductase complex subunit E (230 aa).

A run of 5 helical transmembrane segments spans residues 39 to 59 (LGLGIATLLVLVGSNVTVSLI), 69 to 89 (IPVFVMIIASLVTCVQLLMNA), 93 to 113 (GLYLSLGIFIPLIVTNCIIIG), 125 to 145 (LPAALDGFWMGMGMTTVLVVL), and 182 to 202 (SFLLALLPPGAFIGVGLLIAL).

The protein belongs to the NqrDE/RnfAE family. In terms of assembly, the complex is composed of six subunits: RnfA, RnfB, RnfC, RnfD, RnfE and RnfG.

The protein localises to the cell inner membrane. Part of a membrane-bound complex that couples electron transfer with translocation of ions across the membrane. The chain is Ion-translocating oxidoreductase complex subunit E from Vibrio vulnificus (strain YJ016).